A 711-amino-acid polypeptide reads, in one-letter code: Forkhead box protein P1 (711 aa).

Residues 1 to 19 (MMQESGSEAKSNGSTIQNG) are compositionally biased toward polar residues. The disordered stretch occupies residues 1–41 (MMQESGSEAKSNGSTIQNGSSGGNHLLECGTLRDTRSNGEA). Phosphoserine is present on Ser-115. 2 disordered regions span residues 273–292 (HTAE…TSTC) and 305–332 (MNPH…EHPH). Polar residues predominate over residues 305–317 (MNPHASTNGQLSV). The segment covering 320–332 (PKRESLSHEEHPH) has biased composition (basic and acidic residues). Lys-321 is covalently cross-linked (Glycyl lysine isopeptide (Lys-Gly) (interchain with G-Cter in SUMO2)). The C2H2-type zinc finger occupies 340–365 (GVCKWPGCEAVCDDFPAFLKHLNSEH). The tract at residues 382–403 (VQQLELQLAKDKERLQAMMTHL) is leucine-zipper. Glycyl lysine isopeptide (Lys-Gly) (interchain with G-Cter in SUMO2) cross-links involve residues Lys-406 and Lys-411. A CTBP1-binding region spans residues 416–420 (PLNLV). Residues 424–437 (TLSKSASEASPQSL) show a composition bias toward polar residues. Residues 424–456 (TLSKSASEASPQSLPHTPTTPTAPLTPVTQGPS) are disordered. Over residues 438 to 452 (PHTPTTPTAPLTPVT) the composition is skewed to low complexity. Lys-476 is covalently cross-linked (Glycyl lysine isopeptide (Lys-Gly) (interchain with G-Cter in SUMO2)). The fork-head DNA-binding region spans 499–589 (RPPFTYASLI…PQKISGNPSL (91 aa)). A disordered region spans residues 645 to 711 (EHTNSNESDS…EDEPVNEDME (67 aa)). Residues 646 to 657 (HTNSNESDSSPG) show a composition bias toward polar residues. The residue at position 687 (Thr-687) is a Phosphothreonine. The residue at position 692 (Ser-692) is a Phosphoserine. The span at 701 to 711 (YEDEPVNEDME) shows a compositional bias: acidic residues.

Forms homodimers and heterodimers with FOXP2 and FOXP4. Dimerization is required for DNA-binding. Self-associates. Interacts with CTBP1. Interacts with NCOR2 and AR. Interacts with FOXP2. Interacts with TBR1. Interacts with AURKA; this interaction facilitates the phosphorylation of FOXP1, which suppresses the expression of FBXL7. Interacts with ZMYM2.

The protein resides in the nucleus. Transcriptional repressor. Can act with CTBP1 to synergistically repress transcription but CTPBP1 is not essential. Plays an important role in the specification and differentiation of lung epithelium. Acts cooperatively with FOXP4 to regulate lung secretory epithelial cell fate and regeneration by restricting the goblet cell lineage program; the function may involve regulation of AGR2. Essential transcriptional regulator of B-cell development. Involved in regulation of cardiac muscle cell proliferation. Involved in the columnar organization of spinal motor neurons. Promotes the formation of the lateral motor neuron column (LMC) and the preganglionic motor column (PGC) and is required for respective appropriate motor axon projections. The segment-appropriate generation of spinal cord motor columns requires cooperation with other Hox proteins. Can regulate PITX3 promoter activity; may promote midbrain identity in embryonic stem cell-derived dopamine neurons by regulating PITX3. Negatively regulates the differentiation of T follicular helper cells T(FH)s. Involved in maintenance of hair follicle stem cell quiescence; the function probably involves regulation of FGF18. Represses transcription of various pro-apoptotic genes and cooperates with NF-kappa B-signaling in promoting B-cell expansion by inhibition of caspase-dependent apoptosis. Binds to CSF1R promoter elements and is involved in regulation of monocyte differentiation and macrophage functions; repression of CSF1R in monocytes seems to involve NCOR2 as corepressor. Involved in endothelial cell proliferation, tube formation and migration indicative for a role in angiogenesis; the role in neovascularization seems to implicate suppression of SEMA5B. Can negatively regulate androgen receptor signaling. Acts as a transcriptional activator of the FBXL7 promoter; this activity is regulated by AURKA. This chain is Forkhead box protein P1 (Foxp1), found in Rattus norvegicus (Rat).